We begin with the raw amino-acid sequence, 351 residues long: Putative [LysW]-L-2-aminoadipate/[LysW]-L-glutamate phosphate reductase (351 aa).

NADP(+) is bound by residues 10 to 13 and 34 to 36; these read SGFT and SRK. Cys-151 is an active-site residue. Position 318 (Asn-318) interacts with NADP(+).

The protein belongs to the NAGSA dehydrogenase family. Type 1 subfamily. LysY sub-subfamily.

The protein resides in the cytoplasm. The enzyme catalyses [amino-group carrier protein]-C-terminal-N-(1-carboxy-5-oxopentan-1-yl)-L-glutamine + phosphate + NADP(+) = [amino-group carrier protein]-C-terminal-N-(1-carboxy-5-phosphooxy-5-oxopentan-1-yl)-L-glutamine + NADPH + H(+). The catalysed reaction is [amino-group carrier protein]-C-terminal-gamma-(L-glutamyl-5-semialdehyde)-L-glutamate + phosphate + NADP(+) = [amino-group carrier protein]-C-terminal-gamma-(5-phospho-L-glutamyl)-L-glutamate + NADPH + H(+). Its pathway is amino-acid biosynthesis; L-lysine biosynthesis via AAA pathway; L-lysine from L-alpha-aminoadipate (Thermus route): step 3/5. It participates in amino-acid biosynthesis; L-arginine biosynthesis. In terms of biological role, involved in both the arginine and lysine biosynthetic pathways. This is Putative [LysW]-L-2-aminoadipate/[LysW]-L-glutamate phosphate reductase from Pyrobaculum calidifontis (strain DSM 21063 / JCM 11548 / VA1).